Reading from the N-terminus, the 602-residue chain is Aryl hydrocarbon receptor protein 1 (602 aa).

Residues 1-2 (MY) constitute a propeptide that is removed on maturation. Residues 1–12 (MYASKRRQRNFK) show a composition bias toward basic residues. Residues 1–28 (MYASKRRQRNFKRVRDPPKQLTNTNPSK) form a disordered region. 2 short sequence motifs (nuclear localization signal) span residues 5 to 8 (KRRQ) and 28 to 33 (KRHRER). Residues 18-71 (PKQLTNTNPSKRHRERLNGELETVAMLLPYDSSTISRLDKLSVLRLAVSFLQCK) form the bHLH domain. Required for maintaining the overall integrity of the AHR:ARNT heterodimer and its transcriptional activity regions lie at residues 41–73 (VAMLLPYDSSTISRLDKLSVLRLAVSFLQCKAH), 133–141 (SLKSLGGFI), and 266–268 (ICV). The Nuclear export signal motif lies at 55-63 (LDKLSVLRL). The PAS domain occupies 126 to 196 (ESNFEEISLK…QQLDSNFHIP (71 aa)). The interval 440 to 467 (STSNSLFPSVPVPTPTTTKANRRRKENS) is disordered.

Interacts with daf-21/hsp90. Interacts with aha-1. As to expression, expressed in many distinct neuronal cells including RMED, RMEV, RMEL and RMER. Functions in URX neurons to promote aggregation behavior.

The protein localises to the nucleus. In terms of biological role, probable ligand-activated transcriptional activator. Acts as a transcriptional regulator in GABAergic motor neuron cell fate specification and development. Promotes cell-type-specific expression of guanylate cyclase genes that have key roles in aggregation behavior and hyperoxia avoidance. Has no role in carbon dioxide avoidance. The sequence is that of Aryl hydrocarbon receptor protein 1 from Caenorhabditis elegans.